The following is a 242-amino-acid chain: Small ribosomal subunit protein eS4 (242 aa).

The S4 RNA-binding domain occupies 43–106 (LPLMIIVRDI…GDVYRVLPDE (64 aa)).

This sequence belongs to the eukaryotic ribosomal protein eS4 family.

The chain is Small ribosomal subunit protein eS4 (rps4e) from Methanothermobacter thermautotrophicus (strain ATCC 29096 / DSM 1053 / JCM 10044 / NBRC 100330 / Delta H) (Methanobacterium thermoautotrophicum).